A 428-amino-acid chain; its full sequence is U2 small nuclear ribonucleoprotein auxiliary factor 35 kDa subunit-related protein 2-like (428 aa).

A disordered region spans residues 1-51 (MASRQTAIPEKLSRKQYKAAMKKEKRKKRRQKMARLRALEAPPEEDDDVSA). The span at 23–35 (KEKRKKRRQKMAR) shows a compositional bias: basic residues. The segment covering 42 to 51 (PPEEDDDVSA) has biased composition (acidic residues). Residue Ser-50 is modified to Phosphoserine. The C3H1-type 1 zinc-finger motif lies at 157 to 185 (EKYRPSCPFYNKTGACRFGNRCSRKHDFP). The RRM domain occupies 189 to 295 (PTLLVKSMFT…RQLQCEFCPV (107 aa)). The segment at 297-324 (RWKVAICGLFEMQKCPKGKHCNFLHVFR) adopts a C3H1-type 2 zinc-finger fold. Residues 339 to 428 (MSPPAWTGSS…PGPQSQSHRT (90 aa)) form a disordered region. Ser-340 is modified (phosphoserine). Residues 351–366 (NSDRRERKDHHEEYYS) are compositionally biased toward basic and acidic residues. A compositionally biased stretch (low complexity) spans 367–377 (KSRSYHSGSYH). A Phosphoserine modification is found at Ser-375. Over residues 389-410 (SPHRWKKSHKQTTKSHERHSSR) the composition is skewed to basic residues. The span at 419-428 (PGPQSQSHRT) shows a compositional bias: polar residues.

Interacts with SF3B1. Interacts with ZCRB1. In terms of tissue distribution, highest expression levels are detected in the brain, and lower expression levels in other tissues like epididymis, testis, bone marrow or muscle. In testis, expressed in both Sertoli and spermatogenic cell.

It localises to the nucleus. Plays a role in splicing of the U12-type introns. Implicated also in removal of U2 introns positioned adjacent to a U12 intron. The chain is U2 small nuclear ribonucleoprotein auxiliary factor 35 kDa subunit-related protein 2-like from Mus musculus (Mouse).